A 242-amino-acid polypeptide reads, in one-letter code: tRNA (guanine-N(1)-)-methyltransferase (242 aa).

Residues Gly-109 and Leu-129–Leu-134 each bind S-adenosyl-L-methionine.

Belongs to the RNA methyltransferase TrmD family. As to quaternary structure, homodimer.

Its subcellular location is the cytoplasm. The enzyme catalyses guanosine(37) in tRNA + S-adenosyl-L-methionine = N(1)-methylguanosine(37) in tRNA + S-adenosyl-L-homocysteine + H(+). In terms of biological role, specifically methylates guanosine-37 in various tRNAs. This chain is tRNA (guanine-N(1)-)-methyltransferase, found in Exiguobacterium sibiricum (strain DSM 17290 / CCUG 55495 / CIP 109462 / JCM 13490 / 255-15).